The chain runs to 131 residues: Phosphoribosyl-AMP cyclohydrolase (131 aa).

Residue Asp80 coordinates Mg(2+). Position 81 (Cys81) interacts with Zn(2+). The Mg(2+) site is built by Asp82 and Asp84. Zn(2+)-binding residues include Cys98 and Cys105.

Belongs to the PRA-CH family. Homodimer. Mg(2+) is required as a cofactor. The cofactor is Zn(2+).

It is found in the cytoplasm. The enzyme catalyses 1-(5-phospho-beta-D-ribosyl)-5'-AMP + H2O = 1-(5-phospho-beta-D-ribosyl)-5-[(5-phospho-beta-D-ribosylamino)methylideneamino]imidazole-4-carboxamide. It functions in the pathway amino-acid biosynthesis; L-histidine biosynthesis; L-histidine from 5-phospho-alpha-D-ribose 1-diphosphate: step 3/9. In terms of biological role, catalyzes the hydrolysis of the adenine ring of phosphoribosyl-AMP. The chain is Phosphoribosyl-AMP cyclohydrolase from Azoarcus sp. (strain BH72).